The following is a 45-amino-acid chain: Large ribosomal subunit protein bL34 (45 aa).

The segment at 1-24 is disordered; sequence MTKRTFGGTSRKRKRVSGFRVRMR. Over residues 10–24 the composition is skewed to basic residues; sequence SRKRKRVSGFRVRMR.

It belongs to the bacterial ribosomal protein bL34 family.

This chain is Large ribosomal subunit protein bL34, found in Prochlorococcus marinus (strain MIT 9303).